A 182-amino-acid polypeptide reads, in one-letter code: Orotate phosphoribosyltransferase (182 aa).

Residues Arg93, Lys94, Lys97, and 119–127 each bind 5-phospho-alpha-D-ribose 1-diphosphate; that span reads EDIATTGTS. Positions 123 and 151 each coordinate orotate.

The protein belongs to the purine/pyrimidine phosphoribosyltransferase family. PyrE subfamily. In terms of assembly, homodimer. Requires Mg(2+) as cofactor.

The catalysed reaction is orotidine 5'-phosphate + diphosphate = orotate + 5-phospho-alpha-D-ribose 1-diphosphate. Its pathway is pyrimidine metabolism; UMP biosynthesis via de novo pathway; UMP from orotate: step 1/2. In terms of biological role, catalyzes the transfer of a ribosyl phosphate group from 5-phosphoribose 1-diphosphate to orotate, leading to the formation of orotidine monophosphate (OMP). This is Orotate phosphoribosyltransferase from Haloquadratum walsbyi (strain DSM 16790 / HBSQ001).